We begin with the raw amino-acid sequence, 55 residues long: Large ribosomal subunit protein bL33 (55 aa).

The protein belongs to the bacterial ribosomal protein bL33 family.

The polypeptide is Large ribosomal subunit protein bL33 (Ruegeria pomeroyi (strain ATCC 700808 / DSM 15171 / DSS-3) (Silicibacter pomeroyi)).